Here is a 556-residue protein sequence, read N- to C-terminus: Potassium-transporting ATPase potassium-binding subunit (556 aa).

The next 10 helical transmembrane spans lie at 6 to 26 (AGLI…VPLG), 65 to 85 (GVLA…LVQG), 133 to 153 (GLAV…VALV), 176 to 196 (LRIL…GGAI), 249 to 269 (PTAW…FSLP), 283 to 303 (YAIA…MLWF), 378 to 398 (GLYG…LMVG), 419 to 439 (YFLV…ALPG), 483 to 503 (ALGL…LALA), and 526 to 546 (FVGM…LPML).

This sequence belongs to the KdpA family. The system is composed of three essential subunits: KdpA, KdpB and KdpC.

The protein localises to the cell membrane. Part of the high-affinity ATP-driven potassium transport (or Kdp) system, which catalyzes the hydrolysis of ATP coupled with the electrogenic transport of potassium into the cytoplasm. This subunit binds the extracellular potassium ions and delivers the ions to the membrane domain of KdpB through an intramembrane tunnel. In Mycobacterium avium (strain 104), this protein is Potassium-transporting ATPase potassium-binding subunit.